The chain runs to 424 residues: Histidine--tRNA ligase (424 aa).

The protein belongs to the class-II aminoacyl-tRNA synthetase family. As to quaternary structure, homodimer.

The protein resides in the cytoplasm. The catalysed reaction is tRNA(His) + L-histidine + ATP = L-histidyl-tRNA(His) + AMP + diphosphate + H(+). This is Histidine--tRNA ligase from Shewanella frigidimarina (strain NCIMB 400).